The chain runs to 468 residues: Bone morphogenetic protein 3 (468 aa).

A signal peptide spans 1-22 (MAGARGLLCLWLGYFCLNLAQG). The propeptide occupies 23–358 (QRPNLHLPGL…EQTLKKARRK (336 aa)). The tract at residues 29-53 (LPGLRETEPSDRATGGSPSPDLRPH) is disordered. N-linked (GlcNAc...) asparagine glycans are attached at residues asparagine 115, asparagine 139, asparagine 171, and asparagine 216. The tract at residues 314-349 (RKPYKSLQTQPPEKSRNKKKQRKGSHQKGQTLQFDE) is disordered. Residues 329 to 339 (RNKKKQRKGSH) show a composition bias toward basic residues. The segment covering 340–349 (QKGQTLQFDE) has biased composition (polar residues). Disulfide bonds link cysteine 366–cysteine 433, cysteine 395–cysteine 465, and cysteine 399–cysteine 467. An N-linked (GlcNAc...) asparagine glycan is attached at asparagine 459.

It belongs to the TGF-beta family. In terms of assembly, homodimer; disulfide-linked.

The protein resides in the secreted. Negatively regulates bone density. Antagonizes the ability of certain osteogenic BMPs to induce osteoprogenitor differentiation and ossification. This is Bone morphogenetic protein 3 (Bmp3) from Mus musculus (Mouse).